Consider the following 157-residue polypeptide: 2-C-methyl-D-erythritol 2,4-cyclodiphosphate synthase (157 aa).

Residues Asp-8, His-10, and His-42 each coordinate a divalent metal cation. Residue 8-10 (DVH) coordinates 4-CDP-2-C-methyl-D-erythritol 2-phosphate. Residues 56-58 (DIG), 132-135 (STSE), Phe-139, and Arg-142 each bind 4-CDP-2-C-methyl-D-erythritol 2-phosphate.

Belongs to the IspF family. Homotrimer. It depends on a divalent metal cation as a cofactor.

The catalysed reaction is 4-CDP-2-C-methyl-D-erythritol 2-phosphate = 2-C-methyl-D-erythritol 2,4-cyclic diphosphate + CMP. The protein operates within isoprenoid biosynthesis; isopentenyl diphosphate biosynthesis via DXP pathway; isopentenyl diphosphate from 1-deoxy-D-xylulose 5-phosphate: step 4/6. In terms of biological role, involved in the biosynthesis of isopentenyl diphosphate (IPP) and dimethylallyl diphosphate (DMAPP), two major building blocks of isoprenoid compounds. Catalyzes the conversion of 4-diphosphocytidyl-2-C-methyl-D-erythritol 2-phosphate (CDP-ME2P) to 2-C-methyl-D-erythritol 2,4-cyclodiphosphate (ME-CPP) with a corresponding release of cytidine 5-monophosphate (CMP). The chain is 2-C-methyl-D-erythritol 2,4-cyclodiphosphate synthase from Dehalococcoides mccartyi (strain CBDB1).